Reading from the N-terminus, the 161-residue chain is Allophycocyanin alpha chain (161 aa).

Asn-71 is subject to N4-methylasparagine. Cys-81 is a binding site for (2R,3E)-phycocyanobilin.

Belongs to the phycobiliprotein family. In terms of assembly, heterodimer of an alpha and a beta chain. In terms of processing, contains one covalently linked phycocyanobilin chromophore.

It localises to the plastid. It is found in the chloroplast thylakoid membrane. Functionally, light-harvesting photosynthetic bile pigment-protein from the phycobiliprotein complex. Allophycocyanin has a maximum absorption at approximately 650 nanometers. The sequence is that of Allophycocyanin alpha chain (apcA) from Aglaothamnion neglectum (Red alga).